Consider the following 627-residue polypeptide: Ras and EF-hand domain-containing protein homolog (627 aa).

Residues 55 to 245 (YERVIRNFLR…RKLHDSNDGL (191 aa)) are a coiled coil. Residues Ser266 and Ser272 each carry the phosphoserine modification. GTP is bound by residues 438-443 (AVGKSS), 541-544 (NKAD), and 578-579 (AK).

The protein belongs to the small GTPase superfamily. Rab family. As to quaternary structure, homodimer. Interacts with the dynein-dynactin complex.

It is found in the cytoplasm. It localises to the perinuclear region. Its function is as follows. Binds predominantly GDP, and also GTP. Acts as a dynein adapter protein that activates dynein-mediated transport and dynein-dynactin motility on microtubules. This is Ras and EF-hand domain-containing protein homolog (Rasef) from Mus musculus (Mouse).